A 305-amino-acid chain; its full sequence is UDP-3-O-acyl-N-acetylglucosamine deacetylase (305 aa).

Positions 79, 238, and 242 each coordinate Zn(2+). The Proton donor role is filled by histidine 265.

Belongs to the LpxC family. Zn(2+) serves as cofactor.

It carries out the reaction a UDP-3-O-[(3R)-3-hydroxyacyl]-N-acetyl-alpha-D-glucosamine + H2O = a UDP-3-O-[(3R)-3-hydroxyacyl]-alpha-D-glucosamine + acetate. Its pathway is glycolipid biosynthesis; lipid IV(A) biosynthesis; lipid IV(A) from (3R)-3-hydroxytetradecanoyl-[acyl-carrier-protein] and UDP-N-acetyl-alpha-D-glucosamine: step 2/6. Its function is as follows. Catalyzes the hydrolysis of UDP-3-O-myristoyl-N-acetylglucosamine to form UDP-3-O-myristoylglucosamine and acetate, the committed step in lipid A biosynthesis. This is UDP-3-O-acyl-N-acetylglucosamine deacetylase from Pasteurella multocida (strain Pm70).